The sequence spans 188 residues: Actin-related protein 2/3 complex subunit 3 (188 aa).

This sequence belongs to the ARPC3 family. In terms of assembly, component of the Arp2/3 complex.

It localises to the cytoplasm. The protein localises to the cytoskeleton. In terms of biological role, functions as a component of the Arp2/3 complex which is involved in regulation of actin polymerization and together with an activating nucleation-promoting factor (NPF) mediates the formation of branched actin networks. The polypeptide is Actin-related protein 2/3 complex subunit 3 (Entamoeba histolytica (strain ATCC 30459 / HM-1:IMSS / ABRM)).